Here is a 255-residue protein sequence, read N- to C-terminus: Acetylglutamate kinase (255 aa).

Residues 40-41 (GG), Arg62, and Asn153 each bind substrate.

This sequence belongs to the acetylglutamate kinase family. ArgB subfamily.

It localises to the cytoplasm. The catalysed reaction is N-acetyl-L-glutamate + ATP = N-acetyl-L-glutamyl 5-phosphate + ADP. It functions in the pathway amino-acid biosynthesis; L-arginine biosynthesis; N(2)-acetyl-L-ornithine from L-glutamate: step 2/4. Catalyzes the ATP-dependent phosphorylation of N-acetyl-L-glutamate. This chain is Acetylglutamate kinase, found in Bacillus thuringiensis (strain Al Hakam).